The primary structure comprises 306 residues: Transcription initiation factor IIB (306 aa).

Repeat copies occupy residues 122-205 and 216-297.

Belongs to the TFIIB family.

In terms of biological role, stabilizes TBP binding to an archaeal box-A promoter. Also responsible for recruiting RNA polymerase II to the pre-initiation complex (DNA-TBP-TFIIB). The chain is Transcription initiation factor IIB from Saccharolobus shibatae (strain ATCC 51178 / DSM 5389 / JCM 8931 / NBRC 15437 / B12) (Sulfolobus shibatae).